We begin with the raw amino-acid sequence, 418 residues long: Equilibrative nucleotide transporter 3 (418 aa).

A run of 11 helical transmembrane segments spans residues 20-40, 56-76, 86-106, 112-132, 142-162, 186-206, 264-284, 291-311, 326-346, 353-373, and 392-412; these read MVVC…MLTI, VLTL…AYHE, LIGY…DLAT, IGPY…DATV, LMCP…GALT, MFLA…AYVF, YAVN…GFLY, GLGD…DLVG, KLIT…YFTA, WMIM…VCIM, and LVIF…LWLI.

Belongs to the SLC29A/ENT transporter (TC 2.A.57) family. As to expression, expressed in root tips, vasculature of roots and leaves, and meristems of leaf primordia. Expressed in flowers and siliques.

The protein resides in the cell membrane. Functionally, nucleoside transporter that functions as a pyrimidine nucleoside carrier in all organs. Has high affinity for adenosine and uridine when expressed in a heterologous system (yeast). Mediates proton-dependent adenosine or uridine transport in Xenopus oocytes. The sequence is that of Equilibrative nucleotide transporter 3 from Arabidopsis thaliana (Mouse-ear cress).